The following is a 267-amino-acid chain: Chaperone protein MyfB (267 aa).

The N-terminal stretch at 1-34 (MKYKFSHNFISYNLFLFVFMSLILLPYSHASSMG) is a signal peptide. Cys-127 and Cys-164 are joined by a disulfide.

This sequence belongs to the periplasmic pilus chaperone family.

It is found in the periplasm. Its function is as follows. Required for the biogenesis of the MyfA fimbria. This chain is Chaperone protein MyfB (myfB), found in Yersinia enterocolitica.